The sequence spans 513 residues: Cytochrome P450 94A2 (513 aa).

The helical transmembrane segment at 7-24 (ISWLLFSTSLFWFLFLAT) threads the bilayer. Cys-455 lines the heme pocket.

This sequence belongs to the cytochrome P450 family. It depends on heme as a cofactor. In terms of tissue distribution, weakly expressed in seedlings.

It is found in the endoplasmic reticulum membrane. Catalyzes the omega-hydroxylation of various fatty acids (FA). The substrate specificity is higher for myristate &gt; laurate = palmitate (C14&gt;C16=C12). The sequence is that of Cytochrome P450 94A2 (CYP94A2) from Vicia sativa (Spring vetch).